The chain runs to 106 residues: MAPKSNKNQENINSKLALTIKSGKYTLGYKSVVKSLRTGKAKLVIIAANTPVLRKSELEYYAMLSKTPVYYFQGGNNELGTVCGKLFRVGTLSILDAGDSDILSSI.

It belongs to the eukaryotic ribosomal protein eL30 family. As to quaternary structure, component of the large ribosomal subunit. Mature ribosomes consist of a small (40S) and a large (60S) subunit. The 40S subunit contains about 32 different proteins and 1 molecule of RNA (18S). The 60S subunit contains 45 different proteins and 3 molecules of RNA (25S, 5.8S and 5S).

The protein localises to the cytoplasm. Functionally, component of the ribosome, a large ribonucleoprotein complex responsible for the synthesis of proteins in the cell. The small ribosomal subunit (SSU) binds messenger RNAs (mRNAs) and translates the encoded message by selecting cognate aminoacyl-transfer RNA (tRNA) molecules. The large subunit (LSU) contains the ribosomal catalytic site termed the peptidyl transferase center (PTC), which catalyzes the formation of peptide bonds, thereby polymerizing the amino acids delivered by tRNAs into a polypeptide chain. The nascent polypeptides leave the ribosome through a tunnel in the LSU and interact with protein factors that function in enzymatic processing, targeting, and the membrane insertion of nascent chains at the exit of the ribosomal tunnel. This chain is Large ribosomal subunit protein eL30, found in Candida albicans (strain SC5314 / ATCC MYA-2876) (Yeast).